A 1939-amino-acid chain; its full sequence is Myosin-1 (1939 aa).

Residues 33-82 (DAKTSVFVAEPKESFVKGTVQSREGGKVTVKTEAGATLTVKEDQVFPMNP) enclose the Myosin N-terminal SH3-like domain. A phosphothreonine mark is found at threonine 64 and threonine 69. Residues 86 to 782 (DKIEDMAMMT…LLGLLEEMRD (697 aa)) form the Myosin motor domain. Residue lysine 130 is modified to N6,N6,N6-trimethyllysine. Residue 179–186 (GESGAGKT) coordinates ATP. Tyrosine 389 is modified (phosphotyrosine). Serine 392 bears the Phosphoserine mark. The residue at position 419 (threonine 419) is a Phosphothreonine. The residue at position 424 (tyrosine 424) is a Phosphotyrosine. Serine 625 is subject to Phosphoserine. The tract at residues 659 to 681 (LNKLMTNLRSTHPHFVRCIIPNE) is actin-binding. Histidine 757 is subject to Pros-methylhistidine. Residues 761–775 (KFGHTKVFFKAGLLG) form an actin-binding region. The 30-residue stretch at 785-814 (LAQLITRTQARCRGFLARVEYQKMVERRES) folds into the IQ domain. The stretch at 843–1939 (LLKSAETEKE…EVHTKIISEE (1097 aa)) forms a coiled coil. Phosphoserine occurs at positions 1092 and 1096. 2 disordered regions span residues 1125–1147 (EIEA…SREL) and 1153–1172 (RLEE…KKRE). Positions 1128–1147 (AERASRAKAEKQRSDLSREL) are enriched in basic and acidic residues. Phosphoserine occurs at positions 1162 and 1237. Phosphothreonine is present on threonine 1241. Serine 1243 is subject to Phosphoserine. At threonine 1255 the chain carries Phosphothreonine. Serine 1261 is subject to Phosphoserine. Phosphothreonine is present on residues threonine 1265 and threonine 1286. Phosphoserine occurs at positions 1288, 1292, 1303, and 1306. Tyrosine 1464 carries the post-translational modification Phosphotyrosine. Threonine 1467 is modified (phosphothreonine). The residue at position 1474 (serine 1474) is a Phosphoserine. Tyrosine 1492 carries the post-translational modification Phosphotyrosine. Serine 1495 is subject to Phosphoserine. Position 1501 is a phosphothreonine (threonine 1501). Phosphoserine is present on serine 1514. Residue threonine 1517 is modified to Phosphothreonine. A phosphoserine mark is found at serine 1554, serine 1574, serine 1600, serine 1603, serine 1714, and serine 1726. Phosphothreonine occurs at positions 1730 and 1736. Serine 1739 is modified (phosphoserine).

Belongs to the TRAFAC class myosin-kinesin ATPase superfamily. Myosin family. In terms of assembly, muscle myosin is a hexameric protein that consists of 2 heavy chain subunits (MHC), 2 alkali light chain subunits (MLC) and 2 regulatory light chain subunits (MLC-2). Interacts with SLC26A5.

It localises to the cytoplasm. It is found in the myofibril. In terms of biological role, required for normal hearing. It plays a role in cochlear amplification of auditory stimuli, likely through the positive regulation of prestin (SLC26A5) activity and outer hair cell (OHC) electromotility. This is Myosin-1 (MYH1) from Canis lupus familiaris (Dog).